The sequence spans 210 residues: 3,4-dihydroxy-2-butanone 4-phosphate synthase (210 aa).

D-ribulose 5-phosphate-binding positions include R33–E34, D38, R146–T150, and E170. E34 is a Mg(2+) binding site. Residue H149 coordinates Mg(2+).

The protein belongs to the DHBP synthase family. Homodimer. Mg(2+) serves as cofactor. The cofactor is Mn(2+).

It carries out the reaction D-ribulose 5-phosphate = (2S)-2-hydroxy-3-oxobutyl phosphate + formate + H(+). It participates in cofactor biosynthesis; riboflavin biosynthesis; 2-hydroxy-3-oxobutyl phosphate from D-ribulose 5-phosphate: step 1/1. Catalyzes the conversion of D-ribulose 5-phosphate to formate and 3,4-dihydroxy-2-butanone 4-phosphate. The sequence is that of 3,4-dihydroxy-2-butanone 4-phosphate synthase from Chromobacterium violaceum (strain ATCC 12472 / DSM 30191 / JCM 1249 / CCUG 213 / NBRC 12614 / NCIMB 9131 / NCTC 9757 / MK).